The chain runs to 487 residues: DNA polymerase delta small subunit (487 aa).

Met1 carries the post-translational modification N-acetylmethionine. At Ser20 the chain carries Phosphoserine.

It belongs to the DNA polymerase delta/II small subunit family. As to quaternary structure, DNA polymerase delta is a heterotrimer of POL3, POL32 and HYS2.

The protein resides in the nucleus. It carries out the reaction DNA(n) + a 2'-deoxyribonucleoside 5'-triphosphate = DNA(n+1) + diphosphate. DNA polymerase delta (DNA polymerase III) participates in chromosomal DNA replication. It is required during synthesis of the leading and lagging DNA strands at the replication fork and binds at/or near replication origins and moves along DNA with the replication fork. It has 3'-5' proofreading exonuclease activity that correct errors arising during DNA replication. It is also involved in DNA synthesis during DNA repair. The chain is DNA polymerase delta small subunit (POL31) from Saccharomyces cerevisiae (strain ATCC 204508 / S288c) (Baker's yeast).